Reading from the N-terminus, the 375-residue chain is Growth/differentiation factor 8 (375 aa).

Positions 1 to 18 (MQRLQICVYIYLFVLIVA) are cleaved as a signal peptide. A propeptide spanning residues 19–266 (GPVDLSENSE…VTDTPKRSRR (248 aa)) is cleaved from the precursor. Asparagine 71 carries N-linked (GlcNAc...) asparagine glycosylation. 4 disulfides stabilise this stretch: cysteine 272–cysteine 282, cysteine 281–cysteine 340, cysteine 309–cysteine 372, and cysteine 313–cysteine 374.

Belongs to the TGF-beta family. In terms of assembly, homodimer; disulfide-linked. Interacts with WFIKKN2, leading to inhibit its activity. Interacts with FSTL3. Post-translationally, synthesized as large precursor molecule that undergoes proteolytic cleavage to generate an N-terminal propeptide and a disulfide linked C-terminal dimer, which is the biologically active molecule. The circulating form consists of a latent complex of the C-terminal dimer and other proteins, including its propeptide, which maintain the C-terminal dimer in a latent, inactive state. Ligand activation requires additional cleavage of the prodomain by a tolloid-like metalloproteinase.

It localises to the secreted. Acts specifically as a negative regulator of skeletal muscle growth. This Canis lupus familiaris (Dog) protein is Growth/differentiation factor 8 (MSTN).